Consider the following 340-residue polypeptide: Maltose epimerase (340 aa).

R79 provides a ligand contact to substrate. The active-site Proton donor is H178. D247 lines the substrate pocket. Residue E305 is the Proton acceptor of the active site.

Belongs to the aldose epimerase family.

The catalysed reaction is alpha-maltose = beta-maltose. It functions in the pathway carbohydrate metabolism; hexose metabolism. Its function is as follows. Catalyzes the interconversion of alpha and beta anomers of maltose. The sequence is that of Maltose epimerase from Levilactobacillus brevis (strain ATCC 367 / BCRC 12310 / CIP 105137 / JCM 1170 / LMG 11437 / NCIMB 947 / NCTC 947) (Lactobacillus brevis).